The primary structure comprises 289 residues: Cell division protein ZipA (289 aa).

Position 1 (Met-1) is a topological domain, periplasmic. Residues 2–22 (DIGLREWLIVIGLIVIAGILF) traverse the membrane as a helical segment. Residues 23 to 289 (DGWRRMRGGK…HERRSLMQKR (267 aa)) are Cytoplasmic-facing. The disordered stretch occupies residues 66–141 (REPSFDEQDL…KEREKAPAVA (76 aa)). Residues 81–99 (REAKERKGGKRQEEPRQGD) are compositionally biased toward basic and acidic residues. The span at 100-114 (LDLDEGLALEADPSD) shows a compositional bias: acidic residues.

The protein belongs to the ZipA family. As to quaternary structure, interacts with FtsZ via their C-terminal domains.

It localises to the cell inner membrane. Essential cell division protein that stabilizes the FtsZ protofilaments by cross-linking them and that serves as a cytoplasmic membrane anchor for the Z ring. Also required for the recruitment to the septal ring of downstream cell division proteins. The sequence is that of Cell division protein ZipA from Pseudomonas aeruginosa (strain LESB58).